We begin with the raw amino-acid sequence, 537 residues long: CTP synthase (537 aa).

Residues 1-265 are amidoligase domain; it reads MTKFIFVTGG…GKYLVKRLGL (265 aa). Ser13 is a binding site for CTP. Ser13 contributes to the UTP binding site. An ATP-binding site is contributed by 14 to 19; sequence GLGKGI. Residue Tyr54 participates in L-glutamine binding. Asp71 lines the ATP pocket. Asp71 and Glu139 together coordinate Mg(2+). Residues 146 to 148, 186 to 191, and Lys222 each bind CTP; these read DIE and KTKPTQ. UTP contacts are provided by residues 186–191 and Lys222; that span reads KTKPTQ. The region spanning 290 to 532 is the Glutamine amidotransferase type-1 domain; the sequence is EIAIVGKYVK…VKAAKEYKQE (243 aa). Gly351 contacts L-glutamine. Cys378 functions as the Nucleophile; for glutamine hydrolysis in the catalytic mechanism. L-glutamine contacts are provided by residues 379–382, Glu402, and Arg459; that span reads FGFQ. Catalysis depends on residues His505 and Glu507.

It belongs to the CTP synthase family. As to quaternary structure, homotetramer.

The enzyme catalyses UTP + L-glutamine + ATP + H2O = CTP + L-glutamate + ADP + phosphate + 2 H(+). The catalysed reaction is L-glutamine + H2O = L-glutamate + NH4(+). It carries out the reaction UTP + NH4(+) + ATP = CTP + ADP + phosphate + 2 H(+). It functions in the pathway pyrimidine metabolism; CTP biosynthesis via de novo pathway; CTP from UDP: step 2/2. Its activity is regulated as follows. Allosterically activated by GTP, when glutamine is the substrate; GTP has no effect on the reaction when ammonia is the substrate. The allosteric effector GTP functions by stabilizing the protein conformation that binds the tetrahedral intermediate(s) formed during glutamine hydrolysis. Inhibited by the product CTP, via allosteric rather than competitive inhibition. Functionally, catalyzes the ATP-dependent amination of UTP to CTP with either L-glutamine or ammonia as the source of nitrogen. Regulates intracellular CTP levels through interactions with the four ribonucleotide triphosphates. The protein is CTP synthase of Pyrococcus abyssi (strain GE5 / Orsay).